The chain runs to 270 residues: Cell surface glycoprotein CD200 receptor 4 (270 aa).

The signal sequence occupies residues 1–25; the sequence is MHALGRIPTLTLLIFINIFVSGSSC. The Ig-like V-type domain occupies 26 to 145; it reads TDENQTIQND…GNLEKVYDLQ (120 aa). Residues 26-241 lie on the Extracellular side of the membrane; the sequence is TDENQTIQND…TMTTPRSLLT (216 aa). N-linked (GlcNAc...) asparagine glycosylation is found at asparagine 29 and asparagine 44. 4 disulfide bridges follow: cysteine 58–cysteine 129, cysteine 82–cysteine 97, cysteine 164–cysteine 213, and cysteine 183–cysteine 201. An Ig-like C2-type domain is found at 134-229; that stretch reads PEGNLEKVYD…GNQSLSIELS (96 aa). A glycan (N-linked (GlcNAc...) asparagine) is linked at asparagine 192. The helical transmembrane segment at 242-262 threads the bilayer; it reads ILYVKMALLVIILLNVGFAFF. Over 263-270 the chain is Cytoplasmic; that stretch reads QKRNFART.

The protein belongs to the CD200R family. Interacts with TYROBP. In terms of tissue distribution, highly expressed in monocytes, NK cells and a subset of NKT cells. Weakly expressed in granulocytes and B-cells (at protein level). Expressed in brain, lung, testis, thymus, intestine and uterus. Expressed in bone marrow derived-macrophage and dendritic cells and mast cells.

Its subcellular location is the membrane. Involved in the recruitment or surface expression of the TYROBP receptor. This Mus musculus (Mouse) protein is Cell surface glycoprotein CD200 receptor 4 (Cd200r4).